The primary structure comprises 211 residues: Protein-L-isoaspartate O-methyltransferase (211 aa).

Residue S60 is part of the active site.

Belongs to the methyltransferase superfamily. L-isoaspartyl/D-aspartyl protein methyltransferase family.

The protein resides in the cytoplasm. The enzyme catalyses [protein]-L-isoaspartate + S-adenosyl-L-methionine = [protein]-L-isoaspartate alpha-methyl ester + S-adenosyl-L-homocysteine. Catalyzes the methyl esterification of L-isoaspartyl residues in peptides and proteins that result from spontaneous decomposition of normal L-aspartyl and L-asparaginyl residues. It plays a role in the repair and/or degradation of damaged proteins. The chain is Protein-L-isoaspartate O-methyltransferase from Pseudomonas fluorescens (strain ATCC BAA-477 / NRRL B-23932 / Pf-5).